We begin with the raw amino-acid sequence, 391 residues long: MTNNTKTITLNLGPQHPATHGVLRLILEMDGEVVNNADPHIGLLHRGTEKLIEHKTYLQAIPYFDRLDYVSPMCQEHAFALAVESLLECEVPRRAQFIRVLFSELTRILNHTLNIGSQALDIGATTPLLWLFEEREKIMEFYERVSGSRMHSNYFRPGGVAEDLPDGLLEDIDKFIEQFPPKLHDIESLLNENRLWKQRLVDIGVVSQKEAMDWGFSGPMLRGSGIAWDLRKSNPYDVYDEIDFKVPIGKNGDCYDRYFVRMLEMYESIKIIKQCIEKMPKGAVKTDDPKLTPPTRAKMKESMEAMIHHFKLYTEGYDVPAGETYKAVEAPKGEFGVYLYSQGGNRPYRCRIKAPGFAHLQGLDFISKGHLMADVITIIATLDIVFGEIDR.

The protein belongs to the complex I 49 kDa subunit family. NDH-1 is composed of 14 different subunits. Subunits NuoB, C, D, E, F, and G constitute the peripheral sector of the complex.

The protein resides in the cell inner membrane. It carries out the reaction a quinone + NADH + 5 H(+)(in) = a quinol + NAD(+) + 4 H(+)(out). NDH-1 shuttles electrons from NADH, via FMN and iron-sulfur (Fe-S) centers, to quinones in the respiratory chain. The immediate electron acceptor for the enzyme in this species is believed to be ubiquinone. Couples the redox reaction to proton translocation (for every two electrons transferred, four hydrogen ions are translocated across the cytoplasmic membrane), and thus conserves the redox energy in a proton gradient. The sequence is that of NADH-quinone oxidoreductase subunit D from Rickettsia felis (strain ATCC VR-1525 / URRWXCal2) (Rickettsia azadi).